Reading from the N-terminus, the 758-residue chain is General transcription and DNA repair factor IIH helicase subunit XPD (758 aa).

Residues 7–285 (DVTVYFPYDN…TDAGRLRAEY (279 aa)) form the Helicase ATP-binding domain. ATP is bound at residue 42-49 (MPTGTGKT). [4Fe-4S] cluster contacts are provided by cysteine 116, cysteine 134, cysteine 155, and cysteine 190. The DEAH box motif lies at 234 to 238 (DEAHN).

Belongs to the helicase family. RAD3/XPD subfamily. As to quaternary structure, component of the 7-subunit TFIIH core complex composed of XPB, XPD, TFB1/GTF2H1, GTF2H2/P44, TFB4/GTF2H3, TFB2/GTF2H4 and TFB5/GTF2H5, which is active in NER. The core complex associates with the 3-subunit CDK-activating kinase (CAK) module composed of CYCH1/cyclin H1, CDKD and MAT1/At4g30820 to form the 10-subunit holoenzyme (holo-TFIIH) active in transcription. Interacts with GTF2H2/p44. [4Fe-4S] cluster is required as a cofactor. Expressed at low levels in all tissues.

It is found in the nucleus. It catalyses the reaction Couples ATP hydrolysis with the unwinding of duplex DNA at the replication fork by translocating in the 5'-3' direction. This creates two antiparallel DNA single strands (ssDNA). The leading ssDNA polymer is the template for DNA polymerase III holoenzyme which synthesizes a continuous strand.. The enzyme catalyses ATP + H2O = ADP + phosphate + H(+). Functionally, ATP-dependent 5'-3' DNA helicase, component of the general transcription and DNA repair factor IIH (TFIIH) core complex, which is involved in general and transcription-coupled nucleotide excision repair (NER) of damaged DNA and, when complexed to CDK-activating kinase (CAK), involved in transcription by RNA polymerase II. In NER, TFIIH acts by opening DNA around the lesion to allow the excision of the damaged oligonucleotide and its replacement by a new DNA fragment. The ATP-dependent helicase activity of XPD is required for DNA opening. In transcription, TFIIH has an essential role in transcription initiation. When the pre-initiation complex (PIC) has been established, TFIIH is required for promoter opening and promoter escape. Phosphorylation of the C-terminal tail (CTD) of the largest subunit of RNA polymerase II by the kinase module CAK controls the initiation of transcription. XPD acts by forming a bridge between CAK and the core-TFIIH complex. Essential during plant growth. May negatively regulate a common response program mediated by UV damage and heat stress, that leads to tissue death and reduced chloroplast function. The sequence is that of General transcription and DNA repair factor IIH helicase subunit XPD from Arabidopsis thaliana (Mouse-ear cress).